Here is a 191-residue protein sequence, read N- to C-terminus: Probable GTP-binding protein EngB (191 aa).

Residues 19 to 188 (NIPEICFMGR…HKKIFELFVE (170 aa)) form the EngB-type G domain. Residues 27–34 (GRSNVGKS), 53–57 (GRTQL), 70–73 (DLPG), 136–139 (NKFD), and 167–169 (AST) each bind GTP. Serine 34 and threonine 55 together coordinate Mg(2+).

Belongs to the TRAFAC class TrmE-Era-EngA-EngB-Septin-like GTPase superfamily. EngB GTPase family. Requires Mg(2+) as cofactor.

Its function is as follows. Necessary for normal cell division and for the maintenance of normal septation. In Mycoplasma genitalium (strain ATCC 33530 / DSM 19775 / NCTC 10195 / G37) (Mycoplasmoides genitalium), this protein is Probable GTP-binding protein EngB.